The sequence spans 482 residues: Aspartyl/glutamyl-tRNA(Asn/Gln) amidotransferase subunit B (482 aa).

The protein belongs to the GatB/GatE family. GatB subfamily. As to quaternary structure, heterotrimer of A, B and C subunits.

It carries out the reaction L-glutamyl-tRNA(Gln) + L-glutamine + ATP + H2O = L-glutaminyl-tRNA(Gln) + L-glutamate + ADP + phosphate + H(+). The enzyme catalyses L-aspartyl-tRNA(Asn) + L-glutamine + ATP + H2O = L-asparaginyl-tRNA(Asn) + L-glutamate + ADP + phosphate + 2 H(+). Its function is as follows. Allows the formation of correctly charged Asn-tRNA(Asn) or Gln-tRNA(Gln) through the transamidation of misacylated Asp-tRNA(Asn) or Glu-tRNA(Gln) in organisms which lack either or both of asparaginyl-tRNA or glutaminyl-tRNA synthetases. The reaction takes place in the presence of glutamine and ATP through an activated phospho-Asp-tRNA(Asn) or phospho-Glu-tRNA(Gln). The protein is Aspartyl/glutamyl-tRNA(Asn/Gln) amidotransferase subunit B of Ehrlichia canis (strain Jake).